Here is a 136-residue protein sequence, read N- to C-terminus: Large ribosomal subunit protein uL16 (136 aa).

Belongs to the universal ribosomal protein uL16 family. As to quaternary structure, part of the 50S ribosomal subunit.

In terms of biological role, binds 23S rRNA and is also seen to make contacts with the A and possibly P site tRNAs. The sequence is that of Large ribosomal subunit protein uL16 from Ehrlichia ruminantium (strain Gardel).